The chain runs to 138 residues: Putative pre-16S rRNA nuclease (138 aa).

This sequence belongs to the YqgF nuclease family.

It is found in the cytoplasm. Could be a nuclease involved in processing of the 5'-end of pre-16S rRNA. This is Putative pre-16S rRNA nuclease from Shigella dysenteriae serotype 1 (strain Sd197).